The chain runs to 110 residues: Large ribosomal subunit protein uL22 (110 aa).

It belongs to the universal ribosomal protein uL22 family. Part of the 50S ribosomal subunit.

This protein binds specifically to 23S rRNA; its binding is stimulated by other ribosomal proteins, e.g. L4, L17, and L20. It is important during the early stages of 50S assembly. It makes multiple contacts with different domains of the 23S rRNA in the assembled 50S subunit and ribosome. Functionally, the globular domain of the protein is located near the polypeptide exit tunnel on the outside of the subunit, while an extended beta-hairpin is found that lines the wall of the exit tunnel in the center of the 70S ribosome. This is Large ribosomal subunit protein uL22 from Campylobacter fetus subsp. fetus (strain 82-40).